Reading from the N-terminus, the 1345-residue chain is DNA-directed RNA polymerase subunit beta (1345 aa).

It belongs to the RNA polymerase beta chain family. The RNAP catalytic core consists of 2 alpha, 1 beta, 1 beta' and 1 omega subunit. When a sigma factor is associated with the core the holoenzyme is formed, which can initiate transcription.

The enzyme catalyses RNA(n) + a ribonucleoside 5'-triphosphate = RNA(n+1) + diphosphate. Functionally, DNA-dependent RNA polymerase catalyzes the transcription of DNA into RNA using the four ribonucleoside triphosphates as substrates. The sequence is that of DNA-directed RNA polymerase subunit beta from Shewanella sp. (strain ANA-3).